Reading from the N-terminus, the 487-residue chain is NADH-quinone oxidoreductase subunit N (487 aa).

Helical transmembrane passes span 12-32 (VLILPEILIALGIMALLLIGV), 40-60 (LTVTGLTIALLFATIILIVLF), 79-99 (YMKILTLIGALFSLILSVGFS), 104-124 (FDIFEFPILVLLATLGMMLMI), 129-149 (MLSLYMGLELQSLALYVLAAI), 164-184 (FVLGALSSGLLLYGISLLYGF), 201-221 (ILHLGVIFGIVFILAGLAFKI), 248-268 (APKIAAMALIIRVIVFAFIPL), 281-301 (ILIFMAISSMALGAFAAIGQT), 310-330 (SSIGHMGYALVGLAAGNILGV), 332-352 (GILIYMTIYLGMTIGSFAFIL), 378-398 (AIVMTIQLFSLASIPPMAGFF), 411-431 (GLVPLAIVGMVLSVIGAFYYL), and 455-475 (LCLCLSALFVLFYVFFGFWFS).

It belongs to the complex I subunit 2 family. As to quaternary structure, NDH-1 is composed of 14 different subunits. Subunits NuoA, H, J, K, L, M, N constitute the membrane sector of the complex.

The protein resides in the cell inner membrane. It catalyses the reaction a quinone + NADH + 5 H(+)(in) = a quinol + NAD(+) + 4 H(+)(out). Its function is as follows. NDH-1 shuttles electrons from NADH, via FMN and iron-sulfur (Fe-S) centers, to quinones in the respiratory chain. The immediate electron acceptor for the enzyme in this species is believed to be ubiquinone. Couples the redox reaction to proton translocation (for every two electrons transferred, four hydrogen ions are translocated across the cytoplasmic membrane), and thus conserves the redox energy in a proton gradient. This Bartonella bacilliformis (strain ATCC 35685 / KC583 / Herrer 020/F12,63) protein is NADH-quinone oxidoreductase subunit N.